The chain runs to 880 residues: DNA gyrase subunit A (880 aa).

Positions 35 to 530 constitute a Topo IIA-type catalytic domain; it reads LPDVRDGLKP…ASGDIDLEDL (496 aa). Residue Y123 is the O-(5'-phospho-DNA)-tyrosine intermediate of the active site. A GyrA-box motif is present at residues 557 to 563; the sequence is QRRGGKG.

Belongs to the type II topoisomerase GyrA/ParC subunit family. In terms of assembly, heterotetramer, composed of two GyrA and two GyrB chains. In the heterotetramer, GyrA contains the active site tyrosine that forms a transient covalent intermediate with DNA, while GyrB binds cofactors and catalyzes ATP hydrolysis.

It localises to the cytoplasm. It carries out the reaction ATP-dependent breakage, passage and rejoining of double-stranded DNA.. Its function is as follows. A type II topoisomerase that negatively supercoils closed circular double-stranded (ds) DNA in an ATP-dependent manner to modulate DNA topology and maintain chromosomes in an underwound state. Negative supercoiling favors strand separation, and DNA replication, transcription, recombination and repair, all of which involve strand separation. Also able to catalyze the interconversion of other topological isomers of dsDNA rings, including catenanes and knotted rings. Type II topoisomerases break and join 2 DNA strands simultaneously in an ATP-dependent manner. The protein is DNA gyrase subunit A of Haemophilus influenzae (strain ATCC 51907 / DSM 11121 / KW20 / Rd).